A 43-amino-acid chain; its full sequence is ORF7b protein (43 aa).

The helical transmembrane segment at 9–29 (FYLCFLAFLLFLVLIMLIIFW) threads the bilayer.

Its subcellular location is the host Golgi apparatus membrane. It is found in the host endosome membrane. The sequence is that of ORF7b protein from Homo sapiens (Human).